Consider the following 93-residue polypeptide: Putative septation protein SpoVG (93 aa).

This sequence belongs to the SpoVG family.

In terms of biological role, could be involved in septation. This Alkaliphilus oremlandii (strain OhILAs) (Clostridium oremlandii (strain OhILAs)) protein is Putative septation protein SpoVG.